The following is a 375-amino-acid chain: Secreted LysM effector Vd4LysM (375 aa).

Residues 1–24 (MPSVTISSTMLAGLLLMLVPASSA) form the signal peptide. The LysM 1 domain maps to 57–104 (SWWWDNEGQIPCANMPAEWGITMQDFLRWNPSITSSCGNFLNGRSYCV). The disordered stretch occupies residues 108–139 (GEEPPVPGTPTTTTAPATTTKPSNGITTPQPI). Over residues 116–129 (TPTTTTAPATTTKP) the composition is skewed to low complexity. The LysM 2 domain maps to 149–195 (KFHYISEGDRCQDILSYQKITLADFFKWNPAVKSDCSGLWSKTNACV). Positions 206–217 (TTTTKPATPTTP) are enriched in low complexity. Positions 206–225 (TTTTKPATPTTPSNGITTPQ) are disordered. Residues 237-283 (KFHYISEGDRCQDILSYQKITQADFFKWNPAVKSDCSGLWSKTHACV) form the LysM 3 domain. Residues 287 to 317 (GGQAPPPTPTTTKPTTTKPPGNGVTTPTPTQ) form a disordered region. Over residues 296 to 317 (TTTKPTTTKPPGNGVTTPTPTQ) the composition is skewed to low complexity. The region spanning 326-372 (KFHFVSPGNTCQQIVSYQKITMANFVKWNSGAGSGCNNLWGNTHACV) is the LysM 4 domain.

It belongs to the secreted LysM effector family.

Might have a role in sequestration of chitin oligosaccharides (breakdown products of fungal cell walls that are released during invasion and act as triggers of host immunity) to dampen host defense. Does not play an important role during host colonization. This is Secreted LysM effector Vd4LysM from Verticillium dahliae (strain VdLs.17 / ATCC MYA-4575 / FGSC 10137) (Verticillium wilt).